A 362-amino-acid chain; its full sequence is tRNA/tmRNA (uracil-C(5))-methyltransferase (362 aa).

S-adenosyl-L-methionine contacts are provided by Gln-186, Tyr-214, Asn-219, Glu-235, and Asp-295. Catalysis depends on Cys-320, which acts as the Nucleophile. The Proton acceptor role is filled by Glu-354.

This sequence belongs to the class I-like SAM-binding methyltransferase superfamily. RNA M5U methyltransferase family. TrmA subfamily.

The enzyme catalyses uridine(54) in tRNA + S-adenosyl-L-methionine = 5-methyluridine(54) in tRNA + S-adenosyl-L-homocysteine + H(+). It carries out the reaction uridine(341) in tmRNA + S-adenosyl-L-methionine = 5-methyluridine(341) in tmRNA + S-adenosyl-L-homocysteine + H(+). In terms of biological role, dual-specificity methyltransferase that catalyzes the formation of 5-methyluridine at position 54 (m5U54) in all tRNAs, and that of position 341 (m5U341) in tmRNA (transfer-mRNA). This Ectopseudomonas mendocina (strain ymp) (Pseudomonas mendocina) protein is tRNA/tmRNA (uracil-C(5))-methyltransferase.